The following is a 281-amino-acid chain: Ribosomal RNA small subunit methyltransferase J (281 aa).

Residues 129–130 (RD), 145–146 (ER), and Asp-199 each bind S-adenosyl-L-methionine.

Belongs to the methyltransferase superfamily. RsmJ family.

It is found in the cytoplasm. It catalyses the reaction guanosine(1516) in 16S rRNA + S-adenosyl-L-methionine = N(2)-methylguanosine(1516) in 16S rRNA + S-adenosyl-L-homocysteine + H(+). Its function is as follows. Specifically methylates the guanosine in position 1516 of 16S rRNA. This chain is Ribosomal RNA small subunit methyltransferase J, found in Laribacter hongkongensis (strain HLHK9).